Here is a 237-residue protein sequence, read N- to C-terminus: Pheromone-regulated membrane protein 8 (237 aa).

At 1–47 the chain is on the cytoplasmic side; that stretch reads MQTPSENTNAKSDSLDEPGAYLIEENVALPKDIFHSYLSYWIYEAAH. The chain crosses the membrane as a helical span at residues 48–68; the sequence is CTPVMLLSLVIGVLISIIILF. Topologically, residues 69–74 are extracellular; the sequence is HDNENC. The helical transmembrane segment at 75–95 threads the bilayer; that stretch reads VGVSVGFLLIFSGILVIVLIL. Residues 96-237 are Cytoplasmic-facing; the sequence is RFGPQISDED…QEYPGVDEFF (142 aa). A disordered region spans residues 174–201; the sequence is SSASNVKDAQSNDETAGTPNEAAESSSF. The COPII binding stretch occupies residues 236–237; that stretch reads FF.

This sequence belongs to the DUP/COS family. In terms of assembly, interacts with PRM9. Binds to SEC23/24 of COPII coated vesicles.

Its subcellular location is the membrane. The protein localises to the endoplasmic reticulum. Its function is as follows. May be involved in endoplasmic reticulum exit trafficking of proteins. The sequence is that of Pheromone-regulated membrane protein 8 (PRM8) from Saccharomyces cerevisiae (strain ATCC 204508 / S288c) (Baker's yeast).